A 695-amino-acid polypeptide reads, in one-letter code: Phenoloxidase subunit 2 (695 aa).

Cu cation contacts are provided by H215, H219, and H245. The active-site Proton acceptor is E353. Cu cation contacts are provided by H368, H372, and H408. Cystine bridges form between C586–C630 and C588–C637.

As to quaternary structure, heterodimer. Forms a complex with an interleukin 1-like protein as a consequence of a host defense response. The cofactor is Cu(2+). Post-translationally, the N-terminus is blocked. In terms of tissue distribution, synthesized by oenocytoids, a type of hemocyte, and released into the hemolymph plasma.

It is found in the secreted. It carries out the reaction 2 L-dopa + O2 = 2 L-dopaquinone + 2 H2O. It catalyses the reaction L-tyrosine + O2 = L-dopaquinone + H2O. With respect to regulation, activated by immulectin and lipopolysaccharide. Its function is as follows. This is a copper-containing oxidase that functions in the formation of pigments such as melanins and other polyphenolic compounds. Catalyzes the rate-limiting conversions of tyrosine to DOPA, DOPA to DOPA-quinone and possibly 5,6 dihydroxyindole to indole-5'6 quinone. Binds to the surface of hemocytes and is involved in hemocyte melanization. In Manduca sexta (Tobacco hawkmoth), this protein is Phenoloxidase subunit 2.